Here is a 130-residue protein sequence, read N- to C-terminus: Con-Ins G2 (130 aa).

Residues 1-24 (MTTSSYFLLVALGLLLYVRQSFST) form the signal peptide. Cystine bridges form between Cys29–Cys100, Cys41–Cys103, Cys53–Cys116, and Cys102–Cys107. Pro34 carries the 4-hydroxyproline; partial modification. The tract at residues 54 to 74 (EEEEARRGGTNDGGKKRRRAS) is disordered. Residues 59–92 (RRGGTNDGGKKRRRASPLWKRRRFLSMLKARAKR) constitute a propeptide, c peptide. Glu111 carries the 4-carboxyglutamate; partial modification.

It belongs to the insulin family. In terms of assembly, heterodimer of A and B chains; disulfide-linked. In terms of tissue distribution, expressed by the venom gland.

It is found in the secreted. Functionally, this venom insulin, from a fish-hunting cone snail, facilitates prey capture by rapidly inducing hypoglycemic shock. Intraperitoneal injection of this peptide into zebrafish lowers blood glucose with the same potency than human insulin. In vivo, when applied to water, this peptide reduces overall locomotor activity of zebrafish larvae, observed as a significant decrease in the percentage of time spent swimming and movement frequency. This Conus geographus (Geography cone) protein is Con-Ins G2.